The chain runs to 216 residues: Cytochrome c-type protein Cgr1 (216 aa).

Residues W18 to V38 traverse the membrane as a helical segment. The heme site is built by C46, C50, H51, C95, C98, H99, C142, C147, H148, C176, C179, H180, C190, C193, and H194.

The protein belongs to the multiheme cytochrome c family. May form a membrane-associated complex with Cgr2. In terms of processing, binds 5 heme groups per subunit.

The protein localises to the cell membrane. Probably transfers electrons from a membrane-associated electron donor (e.g. the membrane quinone pool) to the [4Fe-4S] cluster of the Cgr2 reductase via its covalently bound heme groups. This chain is Cytochrome c-type protein Cgr1, found in Eggerthella lenta (strain ATCC 25559 / DSM 2243 / CCUG 17323 / JCM 9979 / KCTC 3265 / NCTC 11813 / VPI 0255 / 1899 B) (Eubacterium lentum).